The following is a 146-amino-acid chain: Deoxyuridine 5'-triphosphate nucleotidohydrolase (146 aa).

Substrate is bound by residues 66 to 68 (RSG), Asn79, 83 to 85 (TVD), and Lys93.

It belongs to the dUTPase family. Requires Mg(2+) as cofactor.

It catalyses the reaction dUTP + H2O = dUMP + diphosphate + H(+). The protein operates within pyrimidine metabolism; dUMP biosynthesis; dUMP from dCTP (dUTP route): step 2/2. This enzyme is involved in nucleotide metabolism: it produces dUMP, the immediate precursor of thymidine nucleotides and it decreases the intracellular concentration of dUTP so that uracil cannot be incorporated into DNA. This is Deoxyuridine 5'-triphosphate nucleotidohydrolase from Fusobacterium nucleatum subsp. nucleatum (strain ATCC 25586 / DSM 15643 / BCRC 10681 / CIP 101130 / JCM 8532 / KCTC 2640 / LMG 13131 / VPI 4355).